Consider the following 558-residue polypeptide: ATP synthase subunit alpha (558 aa).

Gly172 to Thr179 lines the ATP pocket. Residues Glu536–Arg558 are disordered. The span at Thr548 to Arg558 shows a compositional bias: basic and acidic residues.

It belongs to the ATPase alpha/beta chains family. F-type ATPases have 2 components, CF(1) - the catalytic core - and CF(0) - the membrane proton channel. CF(1) has five subunits: alpha(3), beta(3), gamma(1), delta(1), epsilon(1). CF(0) has three main subunits: a(1), b(2) and c(9-12). The alpha and beta chains form an alternating ring which encloses part of the gamma chain. CF(1) is attached to CF(0) by a central stalk formed by the gamma and epsilon chains, while a peripheral stalk is formed by the delta and b chains.

The protein resides in the cell membrane. It catalyses the reaction ATP + H2O + 4 H(+)(in) = ADP + phosphate + 5 H(+)(out). Produces ATP from ADP in the presence of a proton gradient across the membrane. The alpha chain is a regulatory subunit. The chain is ATP synthase subunit alpha from Mycobacterium leprae (strain Br4923).